The chain runs to 484 residues: 1,3-beta-glucanosyltransferase GAS5 (484 aa).

Positions 1 to 19 (MLLRSLTSAFVLSAGLAQA) are cleaved as a signal peptide. N-linked (GlcNAc...) asparagine glycans are attached at residues N24 and N60. C71 and C100 form a disulfide bridge. Residues Y89, N159, and E160 each contribute to the (1,3-beta-D-glucosyl)n site. The Proton donor role is filled by E160. N-linked (GlcNAc...) asparagine glycosylation is present at N166. (1,3-beta-D-glucosyl)n contacts are provided by D201 and R206. 2 cysteine pairs are disulfide-bonded: C215/C348 and C234/C265. The Nucleophile role is filled by E262. Y295 is a binding site for (1,3-beta-D-glucosyl)n. 3 N-linked (GlcNAc...) asparagine glycosylation sites follow: N299, N344, and N359. The segment at 383-462 (TGIATQQSCD…SSQSSSKSKG (80 aa)) is disordered. The span at 394–404 (KDDDDEEDDDT) shows a compositional bias: acidic residues. Residues 405 to 462 (SSSSSSSSSSSSSASSSSESSSSTSKASSSSPSASETSLLKSAASATSSSQSSSKSKG) show a composition bias toward low complexity. G462 carries the GPI-anchor amidated glycine lipid modification. A propeptide spans 463–484 (AAGIIEIPLIFRALAELYNLVL) (removed in mature form).

This sequence belongs to the glycosyl hydrolase 72 family. In terms of processing, the GPI-anchor is attached to the protein in the endoplasmic reticulum and serves to target the protein to the cell surface. There, the glucosamine-inositol phospholipid moiety is cleaved off and the GPI-modified mannoprotein is covalently attached via its lipidless GPI glycan remnant to the 1,6-beta-glucan of the outer cell wall layer.

The protein localises to the secreted. The protein resides in the cell wall. It is found in the membrane. Its function is as follows. Splits internally a 1,3-beta-glucan molecule and transfers the newly generated reducing end (the donor) to the non-reducing end of another 1,3-beta-glucan molecule (the acceptor) forming a 1,3-beta linkage, resulting in the elongation of 1,3-beta-glucan chains in the cell wall. Involved in cell wall biosynthesis and morphogenesis. The chain is 1,3-beta-glucanosyltransferase GAS5 (GAS5) from Saccharomyces cerevisiae (strain ATCC 204508 / S288c) (Baker's yeast).